The chain runs to 130 residues: MKRRTARERAMQALYQMDITGELEPKVAVENTLDEGEETNEFLESLVVGFVENKEAIDEAIRQNLKKWKLERISIVDRSILRVAVYEMKYMEEIPHNVTINEAIEIAKTFGDEESRRFINGVLSNIKDTL.

It belongs to the NusB family.

In terms of biological role, involved in transcription antitermination. Required for transcription of ribosomal RNA (rRNA) genes. Binds specifically to the boxA antiterminator sequence of the ribosomal RNA (rrn) operons. This is Transcription antitermination protein NusB from Bacillus cereus (strain B4264).